Reading from the N-terminus, the 412-residue chain is Multifunctional CCA protein (412 aa).

2 residues coordinate ATP: glycine 8 and arginine 11. 2 residues coordinate CTP: glycine 8 and arginine 11. Mg(2+) contacts are provided by aspartate 21 and aspartate 23. ATP-binding residues include arginine 91, arginine 137, and arginine 140. Residues arginine 91, arginine 137, and arginine 140 each coordinate CTP. Residues 228-329 (TGIHTLMTLS…VKLFDSIDAW (102 aa)) form the HD domain.

It belongs to the tRNA nucleotidyltransferase/poly(A) polymerase family. Bacterial CCA-adding enzyme type 1 subfamily. In terms of assembly, monomer. Can also form homodimers and oligomers. Requires Mg(2+) as cofactor. Ni(2+) serves as cofactor.

It carries out the reaction a tRNA precursor + 2 CTP + ATP = a tRNA with a 3' CCA end + 3 diphosphate. The enzyme catalyses a tRNA with a 3' CCA end + 2 CTP + ATP = a tRNA with a 3' CCACCA end + 3 diphosphate. Catalyzes the addition and repair of the essential 3'-terminal CCA sequence in tRNAs without using a nucleic acid template. Adds these three nucleotides in the order of C, C, and A to the tRNA nucleotide-73, using CTP and ATP as substrates and producing inorganic pyrophosphate. tRNA 3'-terminal CCA addition is required both for tRNA processing and repair. Also involved in tRNA surveillance by mediating tandem CCA addition to generate a CCACCA at the 3' terminus of unstable tRNAs. While stable tRNAs receive only 3'-terminal CCA, unstable tRNAs are marked with CCACCA and rapidly degraded. In Escherichia coli (strain K12 / MC4100 / BW2952), this protein is Multifunctional CCA protein.